The sequence spans 207 residues: Small ribosomal subunit protein uS4 (207 aa).

The disordered stretch occupies residues 31–56 (KCKLDSKPGQHGRTSGARTSDYGNQL). Positions 42 to 53 (GRTSGARTSDYG) are enriched in polar residues. In terms of domain architecture, S4 RNA-binding spans 97 to 157 (ARLDNVVYRM…EKSKKQVRIV (61 aa)).

This sequence belongs to the universal ribosomal protein uS4 family. In terms of assembly, part of the 30S ribosomal subunit. Contacts protein S5. The interaction surface between S4 and S5 is involved in control of translational fidelity.

Its function is as follows. One of the primary rRNA binding proteins, it binds directly to 16S rRNA where it nucleates assembly of the body of the 30S subunit. With S5 and S12 plays an important role in translational accuracy. This chain is Small ribosomal subunit protein uS4, found in Janthinobacterium sp. (strain Marseille) (Minibacterium massiliensis).